The sequence spans 369 residues: Dual specificity protein phosphatase 1-B (369 aa).

Positions 21-138 (RAHKCLILDC…FSSQCPEFCN (118 aa)) constitute a Rhodanese domain. Thr-168 carries the phosphothreonine; by MAPK1 modification. The region spanning 175 to 316 (GPVEILPFLY…LLQFESQVLA (142 aa)) is the Tyrosine-protein phosphatase domain. Residue Cys-260 is the Phosphocysteine intermediate of the active site.

This sequence belongs to the protein-tyrosine phosphatase family. Non-receptor class dual specificity subfamily. Phosphorylated by MAPK1/ERK2 at Thr-168 and at one or more serine residues in a progesterone-dependent manner. Phosphorylation reduces its rate of degradation but does not seem to affect phosphatase activity.

It localises to the nucleus. It catalyses the reaction O-phospho-L-seryl-[protein] + H2O = L-seryl-[protein] + phosphate. The catalysed reaction is O-phospho-L-threonyl-[protein] + H2O = L-threonyl-[protein] + phosphate. The enzyme catalyses O-phospho-L-tyrosyl-[protein] + H2O = L-tyrosyl-[protein] + phosphate. Functionally, dual specificity phosphatase that dephosphorylates MAP kinase MAPK1/ERK2 on both 'Thr-188' and 'Tyr-190', regulating its activity during the meiotic cell cycle. This chain is Dual specificity protein phosphatase 1-B, found in Xenopus laevis (African clawed frog).